Consider the following 449-residue polypeptide: Mannan endo-1,6-alpha-mannosidase DCW1 (449 aa).

The N-terminal stretch at 1–21 (MLVNKVIGLLGVLFATRFTNA) is a signal peptide. N-linked (GlcNAc...) asparagine glycosylation is found at Asn-34, Asn-84, Asn-109, Asn-133, Asn-203, Asn-225, Asn-240, Asn-265, Asn-281, Asn-337, Asn-362, and Asn-420. The GPI-anchor amidated glycine moiety is linked to residue Gly-428. A propeptide spans 429–449 (AGIITAVIGISIVACALWLVF) (removed in mature form).

It belongs to the glycosyl hydrolase 76 family.

Its subcellular location is the cell membrane. The catalysed reaction is Random hydrolysis of (1-&gt;6)-alpha-D-mannosidic linkages in unbranched (1-&gt;6)-mannans.. Its function is as follows. Required for normal synthesis of the cell wall. The chain is Mannan endo-1,6-alpha-mannosidase DCW1 (DCW1) from Saccharomyces cerevisiae (strain ATCC 204508 / S288c) (Baker's yeast).